A 246-amino-acid chain; its full sequence is Putative KilA-N domain-containing protein L33 (246 aa).

A KilA-N domain is found at 20 to 129 (RYTKCQYCDI…AKVSLWIEEW (110 aa)).

In Acanthamoeba polyphaga mimivirus (APMV), this protein is Putative KilA-N domain-containing protein L33.